The chain runs to 137 residues: MRNYENLVIVKPTLTAEEIQANISAIEEIITSNGGEIAARDAMGMRKLAYPLGKNERGYFHVIYYSVDPSAISEIERRFRINEELLRFVTIKYDTNREVTAWNQLVQKAQKKATQPAGEAKVEEVVIPAALEEDEEE.

The protein belongs to the bacterial ribosomal protein bS6 family.

In terms of biological role, binds together with bS18 to 16S ribosomal RNA. The chain is Small ribosomal subunit protein bS6 from Sulfurimonas denitrificans (strain ATCC 33889 / DSM 1251) (Thiomicrospira denitrificans (strain ATCC 33889 / DSM 1251)).